The primary structure comprises 370 residues: Peptide chain release factor 1 (370 aa).

The residue at position 237 (glutamine 237) is an N5-methylglutamine. Residues 286–296 (ERQRSARDATR) show a composition bias toward basic and acidic residues. The disordered stretch occupies residues 286–310 (ERQRSARDATRKSQVGTGDRSEKIR).

This sequence belongs to the prokaryotic/mitochondrial release factor family. Post-translationally, methylated by PrmC. Methylation increases the termination efficiency of RF1.

It is found in the cytoplasm. In terms of biological role, peptide chain release factor 1 directs the termination of translation in response to the peptide chain termination codons UAG and UAA. This is Peptide chain release factor 1 from Anaeromyxobacter dehalogenans (strain 2CP-C).